Consider the following 539-residue polypeptide: Glucose-6-phosphate isomerase (539 aa).

The active-site Proton donor is the glutamate 353. Active-site residues include histidine 384 and lysine 505.

The protein belongs to the GPI family.

It localises to the cytoplasm. The catalysed reaction is alpha-D-glucose 6-phosphate = beta-D-fructose 6-phosphate. It functions in the pathway carbohydrate biosynthesis; gluconeogenesis. The protein operates within carbohydrate degradation; glycolysis; D-glyceraldehyde 3-phosphate and glycerone phosphate from D-glucose: step 2/4. Functionally, catalyzes the reversible isomerization of glucose-6-phosphate to fructose-6-phosphate. The protein is Glucose-6-phosphate isomerase of Ralstonia nicotianae (strain ATCC BAA-1114 / GMI1000) (Ralstonia solanacearum).